The chain runs to 165 residues: Glycine cleavage system H protein, mitochondrial (165 aa).

The N-terminal 34 residues, 1–34, are a transit peptide targeting the mitochondrion; the sequence is MALRMWASSTANALKLSSSSRLHLSPTFSISRCF. Residues 56–138 enclose the Lipoyl-binding domain; the sequence is VATIGITDHA…YEDGWMIKIK (83 aa). The residue at position 97 (lysine 97) is an N6-lipoyllysine.

It belongs to the GcvH family. As to quaternary structure, the glycine cleavage system is composed of four proteins: P, T, L and H. (R)-lipoate is required as a cofactor.

It localises to the mitochondrion. The glycine cleavage system catalyzes the degradation of glycine. The H protein shuttles the methylamine group of glycine from the P protein to the T protein. The polypeptide is Glycine cleavage system H protein, mitochondrial (GDCSH) (Pisum sativum (Garden pea)).